We begin with the raw amino-acid sequence, 388 residues long: Riboflavin biosynthesis protein RibBA (388 aa).

The interval 1–186 is DHBP synthase; that stretch reads MEELREAFEE…MDDVWREFVK (186 aa). Residues 21–22, Asp-26, 125–129, and Glu-149 each bind D-ribulose 5-phosphate; these read RE and RKGHT. A Mg(2+)-binding site is contributed by Glu-22. His-128 is a binding site for Mg(2+). The tract at residues 187–388 is GTP cyclohydrolase II; it reads RKLLMKKKAE…LEEIFREVNS (202 aa). 235 to 239 contributes to the GTP binding site; that stretch reads RIHSE. The Zn(2+) site is built by Cys-240, Cys-251, and Cys-253. Residues Gln-256, 277-279, and Thr-299 each bind GTP; that span reads EGR. The Proton acceptor; for GTP cyclohydrolase activity role is filled by Asp-311. Arg-313 (nucleophile; for GTP cyclohydrolase activity) is an active-site residue. 2 residues coordinate GTP: Thr-334 and Lys-339.

This sequence in the N-terminal section; belongs to the DHBP synthase family. In the C-terminal section; belongs to the GTP cyclohydrolase II family. The cofactor is Mg(2+). Mn(2+) serves as cofactor. It depends on Zn(2+) as a cofactor.

It catalyses the reaction D-ribulose 5-phosphate = (2S)-2-hydroxy-3-oxobutyl phosphate + formate + H(+). It carries out the reaction GTP + 4 H2O = 2,5-diamino-6-hydroxy-4-(5-phosphoribosylamino)-pyrimidine + formate + 2 phosphate + 3 H(+). It functions in the pathway cofactor biosynthesis; riboflavin biosynthesis; 2-hydroxy-3-oxobutyl phosphate from D-ribulose 5-phosphate: step 1/1. It participates in cofactor biosynthesis; riboflavin biosynthesis; 5-amino-6-(D-ribitylamino)uracil from GTP: step 1/4. Its function is as follows. Catalyzes the conversion of D-ribulose 5-phosphate to formate and 3,4-dihydroxy-2-butanone 4-phosphate. In terms of biological role, catalyzes the conversion of GTP to 2,5-diamino-6-ribosylamino-4(3H)-pyrimidinone 5'-phosphate (DARP), formate and pyrophosphate. The sequence is that of Riboflavin biosynthesis protein RibBA from Thermotoga maritima (strain ATCC 43589 / DSM 3109 / JCM 10099 / NBRC 100826 / MSB8).